The following is a 65-amino-acid chain: Small ribosomal subunit protein bS21 (65 aa).

The protein belongs to the bacterial ribosomal protein bS21 family.

The polypeptide is Small ribosomal subunit protein bS21 (Geotalea daltonii (strain DSM 22248 / JCM 15807 / FRC-32) (Geobacter daltonii)).